The sequence spans 100 residues: MDFSQLGGLSGLLDGVKKEFSQLEEKNKDTIHTSKSGGGMVSVSFNGLGELVDLQIDDSLLEDKEAMQIYLMSALNDGYKAVEENRKNLAFNMLGNFAKL.

Belongs to the YbaB/EbfC family. As to quaternary structure, homodimer.

The protein localises to the cytoplasm. It is found in the nucleoid. Binds to DNA and alters its conformation. May be involved in regulation of gene expression, nucleoid organization and DNA protection. The protein is Nucleoid-associated protein jhp_0031 of Helicobacter pylori (strain J99 / ATCC 700824) (Campylobacter pylori J99).